A 207-amino-acid polypeptide reads, in one-letter code: Cytidylyl-2-hydroxypropylphosphonate hydrolase (207 aa).

Positions 68, 74, 76, and 77 each coordinate CDP. Positions 109, 125, 127, and 129 each coordinate a divalent metal cation. Lysine 142 serves as a coordination point for CDP. Lysine 142 (proton donor) is an active-site residue. Position 143 (aspartate 143) interacts with a divalent metal cation.

It belongs to the FomD family. Mn(2+) serves as cofactor. It depends on Co(2+) as a cofactor.

It carries out the reaction cytidine 5'-({hydroxy[(S)-2-hydroxypropyl]phosphonoyl}phosphate) + H2O = (S)-2-hydroxypropylphosphonate + CMP + H(+). It participates in antibiotic biosynthesis; fosfomycin biosynthesis. Hydrolysis of (S)-HPP-CMP is inhibited by CDP. Its function is as follows. Involved in fosfomycin biosynthesis. Catalyzes the hydrolysis of cytidylyl (S)-2-hydroxypropylphosphonate ((S)-HPP-CMP) to give (S)-2-hydroxypropylphosphonate ((S)-HPP) and CMP. Can also hydrolyze (R)-HPP-CMP and cytidylyl 2-hydroxyethylphosphonate (HEP-CMP), which is a biosynthetic intermediate before C-methylation, but the catalytic efficiency is much higher with (S)-HPP-CMP. This Streptomyces fradiae (Streptomyces roseoflavus) protein is Cytidylyl-2-hydroxypropylphosphonate hydrolase.